The following is a 201-amino-acid chain: Ribonuclease HII (201 aa).

In terms of domain architecture, RNase H type-2 spans 15-201; sequence AIIAGVDEAG…FAPIKAYGAP (187 aa). A divalent metal cation is bound by residues D21, E22, and D113.

Belongs to the RNase HII family. Mn(2+) serves as cofactor. The cofactor is Mg(2+).

The protein localises to the cytoplasm. The enzyme catalyses Endonucleolytic cleavage to 5'-phosphomonoester.. Functionally, endonuclease that specifically degrades the RNA of RNA-DNA hybrids. The protein is Ribonuclease HII of Bordetella pertussis (strain Tohama I / ATCC BAA-589 / NCTC 13251).